Here is a 425-residue protein sequence, read N- to C-terminus: Dihydroorotase (425 aa).

Zn(2+) is bound by residues His-61 and His-63. Substrate contacts are provided by residues 63-65 and Asn-95; that span reads HLR. Zn(2+) is bound by residues Asp-153, His-180, and His-233. Asn-279 is a binding site for substrate. Asp-306 is a Zn(2+) binding site. Asp-306 is a catalytic residue. Residue His-310 coordinates substrate.

The protein belongs to the metallo-dependent hydrolases superfamily. DHOase family. Class I DHOase subfamily. It depends on Zn(2+) as a cofactor.

It carries out the reaction (S)-dihydroorotate + H2O = N-carbamoyl-L-aspartate + H(+). It functions in the pathway pyrimidine metabolism; UMP biosynthesis via de novo pathway; (S)-dihydroorotate from bicarbonate: step 3/3. Functionally, catalyzes the reversible cyclization of carbamoyl aspartate to dihydroorotate. The sequence is that of Dihydroorotase from Geobacter sp. (strain M21).